A 22-amino-acid chain; its full sequence is RDCCTPPRKCKDRRCKPMKCCA.

Disulfide bonds link Cys-3–Cys-15, Cys-4–Cys-20, and Cys-10–Cys-21. 2 positions are modified to 4-hydroxyproline; partial: Pro-6 and Pro-7. Position 17 is a 4-hydroxyproline (Pro-17). Ala-22 is subject to Alanine amide.

Belongs to the conotoxin M superfamily. Expressed by the venom duct.

The protein localises to the secreted. Functionally, mu-conotoxins block voltage-gated sodium channels (Nav). The polypeptide is Mu-conotoxin GIIIB (Conus geographus (Geography cone)).